An 83-amino-acid chain; its full sequence is Small ribosomal subunit protein uS17 (83 aa).

Belongs to the universal ribosomal protein uS17 family. As to quaternary structure, part of the 30S ribosomal subunit.

Its function is as follows. One of the primary rRNA binding proteins, it binds specifically to the 5'-end of 16S ribosomal RNA. The sequence is that of Small ribosomal subunit protein uS17 from Nitratiruptor sp. (strain SB155-2).